An 883-amino-acid chain; its full sequence is Valine--tRNA ligase (883 aa).

The short motif at 46 to 56 (PNVTGKLHLGH) is the 'HIGH' region element. A 'KMSKS' region motif is present at residues 520-524 (KMSKS). ATP is bound at residue Lys-523. A coiled-coil region spans residues 809–883 (LADLLNVEEE…RIKEMEKLIK (75 aa)).

The protein belongs to the class-I aminoacyl-tRNA synthetase family. ValS type 1 subfamily. Monomer.

The protein localises to the cytoplasm. It catalyses the reaction tRNA(Val) + L-valine + ATP = L-valyl-tRNA(Val) + AMP + diphosphate. Catalyzes the attachment of valine to tRNA(Val). As ValRS can inadvertently accommodate and process structurally similar amino acids such as threonine, to avoid such errors, it has a 'posttransfer' editing activity that hydrolyzes mischarged Thr-tRNA(Val) in a tRNA-dependent manner. This is Valine--tRNA ligase from Streptococcus mutans serotype c (strain ATCC 700610 / UA159).